Reading from the N-terminus, the 454-residue chain is NADP-specific glutamate dehydrogenase 1 (454 aa).

Residue Lys110 is part of the active site. 174-203 (GVLTGKGLNWGGSLIRPEATGYGLVYYTQA) serves as a coordination point for NAD(+).

It belongs to the Glu/Leu/Phe/Val dehydrogenases family. As to quaternary structure, homohexamer.

It carries out the reaction L-glutamate + NADP(+) + H2O = 2-oxoglutarate + NH4(+) + NADPH + H(+). The chain is NADP-specific glutamate dehydrogenase 1 (GDH1) from Saccharomyces uvarum (strain ATCC 76518 / CBS 7001 / CLIB 283 / NBRC 10550 / MCYC 623 / NCYC 2669 / NRRL Y-11845) (Yeast).